The chain runs to 777 residues: Subtilisin-like protease SBT1.4 (777 aa).

An N-terminal signal peptide occupies residues 1 to 25 (MAKLSLSSIFFVFPLLLCFFSPSSS). The propeptide at 26 to 110 (SSDGLESYIV…VIPDQAREIH (85 aa)) is activation peptide. The 79-residue stretch at 32–110 (SYIVHVQRSH…VIPDQAREIH (79 aa)) folds into the Inhibitor I9 domain. In terms of domain architecture, Peptidase S8 spans 115-614 (PAFLGFSQNS…AGHVDPNKAL (500 aa)). Asp-142 (charge relay system) is an active-site residue. Asn-198 carries N-linked (GlcNAc...) asparagine glycosylation. Positions 199–223 (GTKKHAAKESRSPRDTEGHGTHTAS) are disordered. Basic and acidic residues predominate over residues 205 to 218 (AKESRSPRDTEGHG). Catalysis depends on His-217, which acts as the Charge relay system. N-linked (GlcNAc...) asparagine glycosylation is found at Asn-232 and Asn-395. The 86-residue stretch at 376–461 (LSLVYSGDCG…VGAKAGDQIR (86 aa)) folds into the PA domain. Ser-546 acts as the Charge relay system in catalysis.

This sequence belongs to the peptidase S8 family.

It is found in the secreted. The chain is Subtilisin-like protease SBT1.4 from Arabidopsis thaliana (Mouse-ear cress).